A 306-amino-acid chain; its full sequence is MIKRLNNFFEKINIKPQTKNLINYTTYKIGNISKLFLIPKNIQEAENIFKAAIEEKITLFILGGGSNILVNDKEELDFPIIYTGHLNKIEVHDNKIVAECGANFENLCKIALNSSLSGLEFIYGLPGTLGGAVWMNARCFGNEISEILKKITFINDKGKTICKEFKKEDFKYKVSPFQNKNFFILKTELNLKKENKKIIEEKMNKNKQARINKGHYLFPSSGSTFKNNKSFLRPSGQIIEECKLKGLSVGGAEVSKYHGNFIININNATSNDIKSLIEKVKTEVYSKTGLLLEEEVLYIGFKNQKS.

In terms of domain architecture, FAD-binding PCMH-type spans 28–194 (KIGNISKLFL…LKTELNLKKE (167 aa)). S223 serves as the catalytic Proton donor. E295 is an active-site residue.

The protein belongs to the MurB family. FAD serves as cofactor.

Its subcellular location is the cytoplasm. It carries out the reaction UDP-N-acetyl-alpha-D-muramate + NADP(+) = UDP-N-acetyl-3-O-(1-carboxyvinyl)-alpha-D-glucosamine + NADPH + H(+). Its pathway is cell wall biogenesis; peptidoglycan biosynthesis. Functionally, cell wall formation. The sequence is that of UDP-N-acetylenolpyruvoylglucosamine reductase from Borrelia garinii subsp. bavariensis (strain ATCC BAA-2496 / DSM 23469 / PBi) (Borreliella bavariensis).